A 148-amino-acid polypeptide reads, in one-letter code: Ubiquitin-conjugating enzyme E2 4 (148 aa).

The segment at 1-22 (MSSSKRIAKELSDLERDPPTSC) is disordered. Positions 2 to 148 (SSSKRIAKEL…AREWTKKYAV (147 aa)) constitute a UBC core domain. The span at 7–18 (IAKELSDLERDP) shows a compositional bias: basic and acidic residues. Ser12 carries the post-translational modification Phosphoserine. The active-site Glycyl thioester intermediate is the Cys86. Residue Lys91 forms a Glycyl lysine isopeptide (Lys-Gly) (interchain with G-Cter in ubiquitin) linkage.

It belongs to the ubiquitin-conjugating enzyme family. As to quaternary structure, interacts with TUL1. Post-translationally, the N-terminus is blocked.

The catalysed reaction is S-ubiquitinyl-[E1 ubiquitin-activating enzyme]-L-cysteine + [E2 ubiquitin-conjugating enzyme]-L-cysteine = [E1 ubiquitin-activating enzyme]-L-cysteine + S-ubiquitinyl-[E2 ubiquitin-conjugating enzyme]-L-cysteine.. It functions in the pathway protein modification; protein ubiquitination. E2 ubiquitin-conjugating enzyme that catalyzes the covalent attachment of ubiquitin to other proteins. Mediates the selective degradation of short-lived and abnormal proteins. Mediates ubiquitination of PEX5. The sequence is that of Ubiquitin-conjugating enzyme E2 4 from Saccharomyces cerevisiae (strain ATCC 204508 / S288c) (Baker's yeast).